The following is a 527-amino-acid chain: Probable feruloyl esterase B-2 (527 aa).

The N-terminal stretch at 1–19 is a signal peptide; the sequence is MAPIHYLLPIITLGSAALA. 2 cysteine pairs are disulfide-bonded: Cys-28–Cys-75 and Cys-63–Cys-114. N-linked (GlcNAc...) asparagine glycosylation is found at Asn-53, Asn-85, Asn-98, Asn-138, and Asn-180. Disulfide bonds link Cys-187-Cys-441, Cys-256-Cys-273, Cys-282-Cys-291, and Cys-503-Cys-525. Ser-188 (acyl-ester intermediate) is an active-site residue. Asp-257, Asp-260, Ala-262, Asp-264, and Ile-266 together coordinate Ca(2+). Asn-311 and Asn-355 each carry an N-linked (GlcNAc...) asparagine glycan. Catalysis depends on charge relay system residues Asp-400 and His-440. Asn-516 carries N-linked (GlcNAc...) asparagine glycosylation.

This sequence belongs to the tannase family.

Its subcellular location is the secreted. The enzyme catalyses feruloyl-polysaccharide + H2O = ferulate + polysaccharide.. In terms of biological role, involved in degradation of plant cell walls. Hydrolyzes the feruloyl-arabinose ester bond in arabinoxylans as well as the feruloyl-galactose and feruloyl-arabinose ester bonds in pectin. The protein is Probable feruloyl esterase B-2 (faeB-2) of Aspergillus terreus (strain NIH 2624 / FGSC A1156).